The sequence spans 380 residues: DNA replication and repair protein RecF (380 aa).

30–37 (GPNGFGKT) contacts ATP.

The protein belongs to the RecF family.

It is found in the cytoplasm. In terms of biological role, the RecF protein is involved in DNA metabolism; it is required for DNA replication and normal SOS inducibility. RecF binds preferentially to single-stranded, linear DNA. It also seems to bind ATP. In Mycobacterium sp. (strain JLS), this protein is DNA replication and repair protein RecF.